The chain runs to 300 residues: Nucleotide-binding protein MCCL_0516 (300 aa).

15-22 (GMSGAGKS) is a binding site for ATP. 66 to 69 (DLRG) serves as a coordination point for GTP.

Belongs to the RapZ-like family.

Functionally, displays ATPase and GTPase activities. In Macrococcus caseolyticus (strain JCSC5402) (Macrococcoides caseolyticum), this protein is Nucleotide-binding protein MCCL_0516.